The following is a 31-amino-acid chain: Cytochrome b6-f complex subunit 6 (31 aa).

Residues 4 to 26 (IVSYFGFLLTASTITPALFIGLS) traverse the membrane as a helical segment.

Belongs to the PetL family. In terms of assembly, the 4 large subunits of the cytochrome b6-f complex are cytochrome b6, subunit IV (17 kDa polypeptide, PetD), cytochrome f and the Rieske protein, while the 4 small subunits are PetG, PetL, PetM and PetN. The complex functions as a dimer.

The protein localises to the plastid. The protein resides in the chloroplast thylakoid membrane. In terms of biological role, component of the cytochrome b6-f complex, which mediates electron transfer between photosystem II (PSII) and photosystem I (PSI), cyclic electron flow around PSI, and state transitions. PetL is important for photoautotrophic growth as well as for electron transfer efficiency and stability of the cytochrome b6-f complex. The polypeptide is Cytochrome b6-f complex subunit 6 (Nymphaea alba (White water-lily)).